The chain runs to 196 residues: FMN-dependent NADH:quinone oxidoreductase (196 aa).

Residues Ser-10 and 17–19 (SYS) each bind FMN.

It belongs to the azoreductase type 1 family. As to quaternary structure, homodimer. FMN is required as a cofactor.

It catalyses the reaction 2 a quinone + NADH + H(+) = 2 a 1,4-benzosemiquinone + NAD(+). The catalysed reaction is N,N-dimethyl-1,4-phenylenediamine + anthranilate + 2 NAD(+) = 2-(4-dimethylaminophenyl)diazenylbenzoate + 2 NADH + 2 H(+). Functionally, quinone reductase that provides resistance to thiol-specific stress caused by electrophilic quinones. In terms of biological role, also exhibits azoreductase activity. Catalyzes the reductive cleavage of the azo bond in aromatic azo compounds to the corresponding amines. This chain is FMN-dependent NADH:quinone oxidoreductase, found in Metamycoplasma arthritidis (strain 158L3-1) (Mycoplasma arthritidis).